Here is a 1001-residue protein sequence, read N- to C-terminus: Protein MEI2-like 4 (1001 aa).

Residues 100–120 (HANLPPSPWRPDQETGRQTDS) are disordered. RRM domains lie at 275-348 (RTLF…YSIP) and 360-433 (GTIV…TSRL). Disordered regions lie at residues 767–815 (GGPS…KKQY) and 941–1001 (FHSD…PAKD). The segment covering 793 to 803 (PGERMRSRRND) has biased composition (basic and acidic residues). The segment covering 978–994 (DISITSVNCDTSTNGVD) has biased composition (polar residues).

In terms of biological role, probable RNA-binding protein that may play a role in growth regulation. The chain is Protein MEI2-like 4 (ML4) from Oryza sativa subsp. japonica (Rice).